A 202-amino-acid chain; its full sequence is Cutinase (202 aa).

Positions 1 to 20 are cleaved as a signal peptide; that stretch reads MKTSAQQLLSALLLPLSVLA. An intrachain disulfide couples Cys31 to Cys106. Ser117 (nucleophile) is an active-site residue. Cysteines 165 and 172 form a disulfide. Asp169 is a catalytic residue. The Proton donor/acceptor role is filled by His182.

Belongs to the cutinase family. In terms of processing, the 2 disulfide bonds play a critical role in holding the catalytic residues in juxta-position; reduction of the disulfide bridges results in the complete inactivation of the enzyme.

It is found in the secreted. The enzyme catalyses cutin + H2O = cutin monomers.. Functionally, catalyzes the hydrolysis of complex carboxylic polyesters found in the cell wall of plants. Degrades cutin, a macromolecule that forms the structure of the plant cuticle. Allows pathogenic fungi to penetrate through the cuticular barrier into the host plant during the initial stage of fungal infection. In Botryotinia fuckeliana (Noble rot fungus), this protein is Cutinase.